Reading from the N-terminus, the 298-residue chain is Phosphatidylserine decarboxylase proenzyme (298 aa).

Residues Asp-113, His-169, and Ser-256 each act as charge relay system; for autoendoproteolytic cleavage activity in the active site. Ser-256 (schiff-base intermediate with substrate; via pyruvic acid; for decarboxylase activity) is an active-site residue. A Pyruvic acid (Ser); by autocatalysis modification is found at Ser-256.

The protein belongs to the phosphatidylserine decarboxylase family. PSD-B subfamily. Prokaryotic type II sub-subfamily. In terms of assembly, heterodimer of a large membrane-associated beta subunit and a small pyruvoyl-containing alpha subunit. Pyruvate serves as cofactor. Post-translationally, is synthesized initially as an inactive proenzyme. Formation of the active enzyme involves a self-maturation process in which the active site pyruvoyl group is generated from an internal serine residue via an autocatalytic post-translational modification. Two non-identical subunits are generated from the proenzyme in this reaction, and the pyruvate is formed at the N-terminus of the alpha chain, which is derived from the carboxyl end of the proenzyme. The autoendoproteolytic cleavage occurs by a canonical serine protease mechanism, in which the side chain hydroxyl group of the serine supplies its oxygen atom to form the C-terminus of the beta chain, while the remainder of the serine residue undergoes an oxidative deamination to produce ammonia and the pyruvoyl prosthetic group on the alpha chain. During this reaction, the Ser that is part of the protease active site of the proenzyme becomes the pyruvoyl prosthetic group, which constitutes an essential element of the active site of the mature decarboxylase.

It is found in the cell membrane. The enzyme catalyses a 1,2-diacyl-sn-glycero-3-phospho-L-serine + H(+) = a 1,2-diacyl-sn-glycero-3-phosphoethanolamine + CO2. The protein operates within phospholipid metabolism; phosphatidylethanolamine biosynthesis; phosphatidylethanolamine from CDP-diacylglycerol: step 2/2. In terms of biological role, catalyzes the formation of phosphatidylethanolamine (PtdEtn) from phosphatidylserine (PtdSer). This is Phosphatidylserine decarboxylase proenzyme from Desulfitobacterium hafniense (strain DSM 10664 / DCB-2).